Here is a 427-residue protein sequence, read N- to C-terminus: Serine--tRNA ligase (427 aa).

Thr-236–Glu-238 contacts L-serine. An ATP-binding site is contributed by Arg-267–Glu-269. Position 290 (Glu-290) interacts with L-serine. Glu-354–Ser-357 contributes to the ATP binding site. L-serine is bound at residue Ser-390.

It belongs to the class-II aminoacyl-tRNA synthetase family. Type-1 seryl-tRNA synthetase subfamily. Homodimer. The tRNA molecule binds across the dimer.

It localises to the cytoplasm. It carries out the reaction tRNA(Ser) + L-serine + ATP = L-seryl-tRNA(Ser) + AMP + diphosphate + H(+). The catalysed reaction is tRNA(Sec) + L-serine + ATP = L-seryl-tRNA(Sec) + AMP + diphosphate + H(+). The protein operates within aminoacyl-tRNA biosynthesis; selenocysteinyl-tRNA(Sec) biosynthesis; L-seryl-tRNA(Sec) from L-serine and tRNA(Sec): step 1/1. Functionally, catalyzes the attachment of serine to tRNA(Ser). Is also able to aminoacylate tRNA(Sec) with serine, to form the misacylated tRNA L-seryl-tRNA(Sec), which will be further converted into selenocysteinyl-tRNA(Sec). The sequence is that of Serine--tRNA ligase from Rippkaea orientalis (strain PCC 8801 / RF-1) (Cyanothece sp. (strain PCC 8801)).